The following is a 210-amino-acid chain: MKELMRNVYLLDDTLVTKSKYGSHYGEKVFDGYREWVPWRSKLAAMILKGHRLKLRGDERVLYLGAASGTTVSHLADIVDEGIIYAVEYSAKPFEKLLELVRERNNIIPLLFDASKPWKYSGIVEKVDLIYQDIAQKNQIEILKANAEFFLKEKGEVVIMVKARSIDSTAEPEEVFKSVLKEMEGDFKIVKHGSLMPYHRDHIFIHAYRF.

Residues 70–71, 88–89, 113–114, and 133–136 each bind S-adenosyl-L-methionine; these read TT, EY, DA, and DIAQ.

This sequence belongs to the methyltransferase superfamily. Fibrillarin family. Interacts with nop5. Component of box C/D small ribonucleoprotein (sRNP) particles that contain rpl7ae, FlpA and nop5, plus a guide RNA.

Its function is as follows. Involved in pre-rRNA and tRNA processing. Utilizes the methyl donor S-adenosyl-L-methionine to catalyze the site-specific 2'-hydroxyl methylation of ribose moieties in rRNA and tRNA. Site specificity is provided by a guide RNA that base pairs with the substrate. Methylation occurs at a characteristic distance from the sequence involved in base pairing with the guide RNA. This chain is Fibrillarin-like rRNA/tRNA 2'-O-methyltransferase, found in Archaeoglobus fulgidus (strain ATCC 49558 / DSM 4304 / JCM 9628 / NBRC 100126 / VC-16).